The sequence spans 240 residues: 1-(5-phosphoribosyl)-5-[(5-phosphoribosylamino)methylideneamino] imidazole-4-carboxamide isomerase (240 aa).

D8 (proton acceptor) is an active-site residue. D129 serves as the catalytic Proton donor.

Belongs to the HisA/HisF family.

It localises to the cytoplasm. The enzyme catalyses 1-(5-phospho-beta-D-ribosyl)-5-[(5-phospho-beta-D-ribosylamino)methylideneamino]imidazole-4-carboxamide = 5-[(5-phospho-1-deoxy-D-ribulos-1-ylimino)methylamino]-1-(5-phospho-beta-D-ribosyl)imidazole-4-carboxamide. It functions in the pathway amino-acid biosynthesis; L-histidine biosynthesis; L-histidine from 5-phospho-alpha-D-ribose 1-diphosphate: step 4/9. The protein is 1-(5-phosphoribosyl)-5-[(5-phosphoribosylamino)methylideneamino] imidazole-4-carboxamide isomerase of Herpetosiphon aurantiacus (strain ATCC 23779 / DSM 785 / 114-95).